A 144-amino-acid chain; its full sequence is Large ribosomal subunit protein uL15 (144 aa).

The interval 1-49 (MRLNTLSPAAGAKSAAKRVGRGIGSGTGKTCGRGHKGQKSRSGGGVRVG) is disordered. Positions 21 to 31 (RGIGSGTGKTC) are enriched in gly residues.

Belongs to the universal ribosomal protein uL15 family. In terms of assembly, part of the 50S ribosomal subunit.

In terms of biological role, binds to the 23S rRNA. The protein is Large ribosomal subunit protein uL15 of Shewanella sediminis (strain HAW-EB3).